Reading from the N-terminus, the 94-residue chain is DNA-directed RNA polymerase subunit omega (94 aa).

It belongs to the RNA polymerase subunit omega family. In terms of assembly, consists of a sigma factor and the RNAP core enzyme which is composed of 2 alpha chains, 1 beta chain, 1 beta' chain and 1 subunit omega.

It carries out the reaction RNA(n) + a ribonucleoside 5'-triphosphate = RNA(n+1) + diphosphate. In terms of biological role, promotes RNA polymerase assembly. Latches the N- and C-terminal regions of the beta' subunit thereby facilitating its interaction with the beta and alpha subunits. The chain is DNA-directed RNA polymerase subunit omega from Shewanella violacea (strain JCM 10179 / CIP 106290 / LMG 19151 / DSS12).